Consider the following 459-residue polypeptide: Serine protease HTRA3 (459 aa).

A signal peptide spans Met-1 to Ala-23. An IGFBP N-terminal domain is found at Pro-27 to Arg-90. 8 cysteine pairs are disulfide-bonded: Cys-31-Cys-54, Cys-35-Cys-56, Cys-40-Cys-57, Cys-45-Cys-60, Cys-68-Cys-82, Cys-76-Cys-87, Cys-89-Cys-107, and Cys-96-Cys-132. A Kazal-like domain is found at Cys-76–Ser-134. Residues Gly-181–Phe-346 are serine protease. Residues His-197, Asp-233, and Ser-311 each act as charge relay system in the active site. Residues Ile-365 to Leu-450 enclose the PDZ domain.

This sequence belongs to the peptidase S1C family. In terms of assembly, homotrimer. Interacts with TGFB1; the interaction inhibits TGFB-mediated signaling. Interacts with BMP4; the interaction inhibits BMP4-mediated signaling. Interacts with TGFB2, GDF5 and MYH9. As to expression, expressed in the ovary, essentially in granulosa cells in a follicle-stage specific manner. Highest levels found in large luteinizing granulosa cells.

The protein resides in the secreted. Functionally, serine protease that cleaves beta-casein/CSN2 as well as several extracellular matrix (ECM) proteoglycans such as decorin/DCN, biglycan/BGN and fibronectin/FN1. Inhibits signaling mediated by TGF-beta family proteins possibly indirectly by degradation of these ECM proteoglycans. May act as a tumor suppressor. Negatively regulates, in vitro, trophoblast invasion during placental development and may be involved in the development of the placenta in vivo. May also have a role in ovarian development, granulosa cell differentiation and luteinization. This is Serine protease HTRA3 (Htra3) from Rattus norvegicus (Rat).